The primary structure comprises 326 residues: tRNA-cytidine(32) 2-sulfurtransferase (326 aa).

The short motif at 63–68 (SGGKDS) is the PP-loop motif element. Cysteine 138, cysteine 141, and cysteine 229 together coordinate [4Fe-4S] cluster.

The protein belongs to the TtcA family. In terms of assembly, homodimer. Mg(2+) serves as cofactor. The cofactor is [4Fe-4S] cluster.

It localises to the cytoplasm. The enzyme catalyses cytidine(32) in tRNA + S-sulfanyl-L-cysteinyl-[cysteine desulfurase] + AH2 + ATP = 2-thiocytidine(32) in tRNA + L-cysteinyl-[cysteine desulfurase] + A + AMP + diphosphate + H(+). It participates in tRNA modification. Catalyzes the ATP-dependent 2-thiolation of cytidine in position 32 of tRNA, to form 2-thiocytidine (s(2)C32). The sulfur atoms are provided by the cysteine/cysteine desulfurase (IscS) system. This is tRNA-cytidine(32) 2-sulfurtransferase from Leptothrix cholodnii (strain ATCC 51168 / LMG 8142 / SP-6) (Leptothrix discophora (strain SP-6)).